The primary structure comprises 545 residues: Chaperonin GroEL (545 aa).

Residues 30-33 (TLGP), Lys-51, 87-91 (DGTTT), Gly-415, and Asp-495 contribute to the ATP site.

It belongs to the chaperonin (HSP60) family. As to quaternary structure, forms a cylinder of 14 subunits composed of two heptameric rings stacked back-to-back. Interacts with the co-chaperonin GroES.

Its subcellular location is the cytoplasm. The enzyme catalyses ATP + H2O + a folded polypeptide = ADP + phosphate + an unfolded polypeptide.. Functionally, together with its co-chaperonin GroES, plays an essential role in assisting protein folding. The GroEL-GroES system forms a nano-cage that allows encapsulation of the non-native substrate proteins and provides a physical environment optimized to promote and accelerate protein folding. The sequence is that of Chaperonin GroEL from Shewanella baltica (strain OS185).